Reading from the N-terminus, the 352-residue chain is Protein-glutamate methylesterase/protein-glutamine glutaminase 2 (352 aa).

Residues 1–116 (MVVDDSAVVR…KQFLTDSADE (116 aa)) form the Response regulatory domain. Asp50 carries the post-translational modification 4-aspartylphosphate. A CheB-type methylesterase domain is found at 162 to 352 (AQTTERIVAI…MAREIVTQLQ (191 aa)). Catalysis depends on residues Ser174, His200, and Asp296.

The protein belongs to the CheB family. Post-translationally, phosphorylated by CheA. Phosphorylation of the N-terminal regulatory domain activates the methylesterase activity.

Its subcellular location is the cytoplasm. It carries out the reaction [protein]-L-glutamate 5-O-methyl ester + H2O = L-glutamyl-[protein] + methanol + H(+). The enzyme catalyses L-glutaminyl-[protein] + H2O = L-glutamyl-[protein] + NH4(+). Involved in chemotaxis. Part of a chemotaxis signal transduction system that modulates chemotaxis in response to various stimuli. Catalyzes the demethylation of specific methylglutamate residues introduced into the chemoreceptors (methyl-accepting chemotaxis proteins or MCP) by CheR. Also mediates the irreversible deamidation of specific glutamine residues to glutamic acid. In Xanthomonas axonopodis pv. citri (strain 306), this protein is Protein-glutamate methylesterase/protein-glutamine glutaminase 2.